The sequence spans 117 residues: Hainantoxin-XV (117 aa).

Positions Met-1–Ser-20 are cleaved as a signal peptide. Positions Ser-20–Glu-55 are disordered. The propeptide occupies Ser-21 to Arg-56. Basic and acidic residues predominate over residues Asn-23–Glu-55. 4 cysteine pairs are disulfide-bonded: Cys-58–Cys-72, Cys-65–Cys-78, Cys-69–Cys-115, and Cys-71–Cys-91.

It belongs to the neurotoxin 03 (Tx2) family. 02 subfamily. HNTX-XV sub-subfamily. In terms of tissue distribution, expressed by the venom gland.

Its subcellular location is the secreted. In terms of biological role, putative ion channel inhibitor. The chain is Hainantoxin-XV from Cyriopagopus hainanus (Chinese bird spider).